A 382-amino-acid chain; its full sequence is Protein RecA (382 aa).

Position 79–86 (79–86) interacts with ATP; the sequence is GPESSGKT.

Belongs to the RecA family.

Its subcellular location is the cytoplasm. In terms of biological role, can catalyze the hydrolysis of ATP in the presence of single-stranded DNA, the ATP-dependent uptake of single-stranded DNA by duplex DNA, and the ATP-dependent hybridization of homologous single-stranded DNAs. It interacts with LexA causing its activation and leading to its autocatalytic cleavage. This is Protein RecA from Streptococcus sanguinis (strain SK36).